The sequence spans 1408 residues: DNA-directed RNA polymerase subunit beta' (1408 aa).

Residues C70, C72, C85, and C88 each contribute to the Zn(2+) site. Positions 460, 462, and 464 each coordinate Mg(2+). The Zn(2+) site is built by C814, C887, C894, and C897.

The protein belongs to the RNA polymerase beta' chain family. The RNAP catalytic core consists of 2 alpha, 1 beta, 1 beta' and 1 omega subunit. When a sigma factor is associated with the core the holoenzyme is formed, which can initiate transcription. Mg(2+) serves as cofactor. It depends on Zn(2+) as a cofactor.

The enzyme catalyses RNA(n) + a ribonucleoside 5'-triphosphate = RNA(n+1) + diphosphate. In terms of biological role, DNA-dependent RNA polymerase catalyzes the transcription of DNA into RNA using the four ribonucleoside triphosphates as substrates. This chain is DNA-directed RNA polymerase subunit beta', found in Hydrogenovibrio crunogenus (strain DSM 25203 / XCL-2) (Thiomicrospira crunogena).